The following is a 136-amino-acid chain: MSKDTIANILTSIRNADMNKKRTVRIPYTNITENILKILLREGFIENMRKHQESNNLFFVLTLRHRRKRNRKGPDKTVLNLKRISRPGLRIYSNYQRIPRILGGMGIVILSTSRGIMTDREARLEGIGGEILCYIW.

The protein belongs to the universal ribosomal protein uS8 family. Part of the 30S ribosomal subunit.

The protein localises to the plastid. The protein resides in the chloroplast. One of the primary rRNA binding proteins, it binds directly to 16S rRNA central domain where it helps coordinate assembly of the platform of the 30S subunit. This chain is Small ribosomal subunit protein uS8c (rps8), found in Morus indica (Mulberry).